Reading from the N-terminus, the 229-residue chain is Non-structural protein P8 (229 aa).

The segment covering 13-31 has biased composition (basic and acidic residues); sequence KMKHNQDRVEEPSQVRVDD. Residues 13–46 are disordered; sequence KMKHNQDRVEEPSQVRVDDTISQPPRYAPSAPMP. Residues 36–46 are compositionally biased toward low complexity; that stretch reads PPRYAPSAPMP. Helical transmembrane passes span 119-139 and 162-182; these read IIHT…VCTL and SLNP…MVCA.

Belongs to the orbivirus NS3 family. In terms of assembly, forms homooligomers via coiled-coil motif. Interacts with host OPTN; this interaction inhibits innate immune response.

It localises to the host cell membrane. The protein resides in the host Golgi apparatus. Functionally, plays a role in the inhibition of host innate immune response. Interacts with host OPTN and thus inhibits the recruitment of TBK1 to the host Golgi apparatus. In turn, downstream partner IRF3 cannot be activated and IFN-beta production is impaired. In terms of biological role, facilitates viral particle release either by increasing plasma membrane permeability through a viroporin-like activity or by viral budding. This Antilocapra americana (Pronghorn) protein is Non-structural protein P8 (Segment-10).